Consider the following 37-residue polypeptide: uncharacterized protein (37 aa).

An N-terminal signal peptide occupies residues 1 to 23; that stretch reads MLNFSLCLYPVFILNKLVLRTQS.

This sequence belongs to the orthopoxviruses VACWR204.5 protein family.

This is an uncharacterized protein from Vaccinia virus (strain Western Reserve) (VACV).